The sequence spans 347 residues: Ultraviolet-sensitive opsin (347 aa).

The Extracellular portion of the chain corresponds to 1–37; sequence MSGEEEFYLFKNGSIGGPWDGPQYHIAPPWAFYLQTA. N-linked (GlcNAc...) asparagine glycosylation occurs at N12. The helical transmembrane segment at 38 to 58 threads the bilayer; it reads FMGFVFMVGTPLNAIVLVVTI. Over 59-69 the chain is Cytoplasmic; sequence KYKKLRQPLNY. The helical transmembrane segment at 70-90 threads the bilayer; the sequence is ILVNISFCGFLACIICIFTVF. The Extracellular segment spans residues 91–106; it reads VSSSQGYFVFGKHVCA. The cysteines at positions 105 and 182 are disulfide-linked. Residues 107–127 traverse the membrane as a helical segment; it reads FEGFMGATAGLVTGWSLAFLA. At 128 to 147 the chain is on the cytoplasmic side; sequence FERYIVICKPLGNFRFTAKH. A helical transmembrane segment spans residues 148 to 168; the sequence is ALVVVVATWVIGIGVAIPPFF. Topologically, residues 169–197 are extracellular; the sequence is GWSRYVPEGLQCSCGPDWYTVGTKYRSEY. A helical membrane pass occupies residues 198-218; that stretch reads YTWFLFIFCFIVPLSLIIFSY. At 219-247 the chain is on the cytoplasmic side; that stretch reads SQLLSALRAVAAQQQESATTQKAEREVSR. The helical transmembrane segment at 248-268 threads the bilayer; that stretch reads MVVVMVGSFCVCYVPYAALAM. The Extracellular segment spans residues 269–282; that stretch reads YMVNNREHGIDLRL. A helical transmembrane segment spans residues 283-303; it reads VTIPAFFSKSSCVYNPIIYCF. Residue K291 is modified to N6-(retinylidene)lysine. Residues 304–347 are Cytoplasmic-facing; sequence MNKQFRGCIMEMVCGKPMTDDSDMSSSAQRTEVSSVSSSQVSPS. Residue C317 is the site of S-palmitoyl cysteine attachment. The segment at 324–347 is disordered; that stretch reads DSDMSSSAQRTEVSSVSSSQVSPS. Over residues 328–347 the composition is skewed to low complexity; that stretch reads SSSAQRTEVSSVSSSQVSPS.

Belongs to the G-protein coupled receptor 1 family. Opsin subfamily. Phosphorylated on some or all of the serine and threonine residues present in the C-terminal region. In terms of tissue distribution, cone photoreceptor cells.

The protein localises to the membrane. Visual pigments are the light-absorbing molecules that mediate vision. They consist of an apoprotein, opsin, covalently linked to cis-retinal. The sequence is that of Ultraviolet-sensitive opsin from Melopsittacus undulatus (Budgerigar).